We begin with the raw amino-acid sequence, 823 residues long: ATP-dependent RNA helicase HrpA (823 aa).

Residues 16–179 (IKVLKNHNVL…FNNAPVVSIE (164 aa)) enclose the Helicase ATP-binding domain. 29-36 (SPTGSGKT) is a binding site for ATP. Residues 126 to 129 (DEAH) carry the DEAH box motif. The 172-residue stretch at 203 to 374 (KIKEIVLNVI…EVVLRMADIG (172 aa)) folds into the Helicase C-terminal domain.

This sequence belongs to the DEAD box helicase family. DEAH subfamily.

It carries out the reaction ATP + H2O = ADP + phosphate + H(+). Has RNA-stimulated ATPase activity and RNA helicase activity. Involved in global regulation of gene expression. Could be involved in RNA processing and post-transcriptional gene regulation. Essential for both tick transmission and mouse infection. The polypeptide is ATP-dependent RNA helicase HrpA (Borreliella burgdorferi (strain ATCC 35210 / DSM 4680 / CIP 102532 / B31) (Borrelia burgdorferi)).